A 99-amino-acid polypeptide reads, in one-letter code: MKATRRTRVASERGVRRRRRVRATRKAGELPVKVWARTLPSAAWDPVGSVRTQVTPSRAAPRTCQPPAWSSRRRGRPRSSRARSTEPAWSPEGVVRCAT.

Disordered stretches follow at residues 1-24 (MKAT…VRAT) and 49-99 (SVRT…RCAT). Composition is skewed to basic residues over residues 15 to 24 (VRRRRRVRAT) and 71 to 81 (SRRRGRPRSSR).

This is an uncharacterized protein from Streptomyces fradiae (Streptomyces roseoflavus).